The chain runs to 456 residues: Exodeoxyribonuclease 7 large subunit (456 aa).

It belongs to the XseA family. As to quaternary structure, heterooligomer composed of large and small subunits.

Its subcellular location is the cytoplasm. The catalysed reaction is Exonucleolytic cleavage in either 5'- to 3'- or 3'- to 5'-direction to yield nucleoside 5'-phosphates.. Bidirectionally degrades single-stranded DNA into large acid-insoluble oligonucleotides, which are then degraded further into small acid-soluble oligonucleotides. The polypeptide is Exodeoxyribonuclease 7 large subunit (Escherichia coli (strain SE11)).